The chain runs to 158 residues: Encapsulin nanocompartment cargo protein EncB (158 aa).

Positions 22, 52, and 55 each coordinate Fe cation. Short sequence motifs (di-iron-binding motif) lie at residues Glu52–His55 and Glu58–His61. The disordered stretch occupies residues Ala92 to Arg158. Positions Leu142 to Arg149 are probable targeting peptide. Residues Arg148–Arg158 are compositionally biased toward gly residues.

The protein belongs to the ferritin-like superfamily.

It localises to the encapsulin nanocompartment. Functionally, cargo protein of a type 1 encapsulin nanocompartment. May help nucleate Fe atoms in the interior of the encapsulin nanocompartment. Present in about 36 copies/encapsulin nanocompartment. This Myxococcus xanthus (strain DK1622) protein is Encapsulin nanocompartment cargo protein EncB.